We begin with the raw amino-acid sequence, 94 residues long: Small ubiquitin-related modifier 3-like (94 aa).

Lys11 participates in a covalent cross-link: Glycyl lysine isopeptide (Lys-Gly) (interchain with G-Cter in SUMO). In terms of domain architecture, Ubiquitin-like spans 15-92; sequence DHINLKVAGQ…IDVFQQQTGG (78 aa). Residue Gly92 forms a Glycyl lysine isopeptide (Gly-Lys) (interchain with K-? in acceptor proteins) linkage. A propeptide spanning residues 93-94 is cleaved from the precursor; it reads SC.

It belongs to the ubiquitin family. SUMO subfamily. Interacts with sae2 and ube2i. Covalently attached to a number of proteins. In terms of processing, polymeric chains can be formed through Lys-11 cross-linking. Post-translationally, cleavage of precursor form by a sentrin-specific protease is necessary for function.

The protein resides in the cytoplasm. Its subcellular location is the nucleus. It is found in the PML body. Functionally, ubiquitin-like protein which can be covalently attached to target lysines either as a monomer or as a lysine-linked polymer. Does not seem to be involved in protein degradation and may function as an antagonist of ubiquitin in the degradation process. Plays a role in a number of cellular processes such as nuclear transport, DNA replication and repair, mitosis and signal transduction. Covalent attachment to its substrates requires prior activation by the E1 complex sae1-sae2 and linkage to the E2 enzyme ube2i. This chain is Small ubiquitin-related modifier 3-like (sumo3l), found in Danio rerio (Zebrafish).